The sequence spans 449 residues: Mycosin-1 (449 aa).

Residues 1–23 (MQRVAVMVLAVLLALFSAPPAWA) form the signal peptide. An intrachain disulfide couples cysteine 51 to cysteine 120. The Peptidase S8 domain occupies 66–389 (PWANDYLRIQ…AGVIDPVAAL (324 aa)). Active-site charge relay system residues include aspartate 92 and histidine 123. Disordered regions lie at residues 160–179 (FQPK…QTAG) and 240–259 (TGQD…SDPR). Polar residues predominate over residues 170–179 (NDPNTTQTAG). A disulfide bridge connects residues cysteine 206 and cysteine 244. The active-site Charge relay system is serine 334. Residues 421–441 (ITAVVIAGATLAFALGIGALA) form a helical membrane-spanning segment.

It belongs to the peptidase S8 family.

It is found in the cell membrane. Functionally, may play a dual role in regulation of ESX-1 secretion and virulence. Acts as a protease that cleaves EspB. The protein is Mycosin-1 of Mycolicibacterium smegmatis (strain ATCC 700084 / mc(2)155) (Mycobacterium smegmatis).